Reading from the N-terminus, the 241-residue chain is 6-hydroxymethyl-7,8-dihydropterin pyrophosphokinase (241 aa).

The protein belongs to the archaeal 6-HMPDK family. The cofactor is Mg(2+).

The catalysed reaction is 6-hydroxymethyl-7,8-dihydropterin + ATP = (7,8-dihydropterin-6-yl)methyl diphosphate + AMP + H(+). It participates in cofactor biosynthesis; 5,6,7,8-tetrahydromethanopterin biosynthesis. Catalyzes the transfer of diphosphate from ATP to 6-hydroxymethyl-7,8-dihydropterin (6-HMD), leading to 6-hydroxymethyl-7,8-dihydropterin diphosphate (6-HMDP). The polypeptide is 6-hydroxymethyl-7,8-dihydropterin pyrophosphokinase (Methanocaldococcus jannaschii (strain ATCC 43067 / DSM 2661 / JAL-1 / JCM 10045 / NBRC 100440) (Methanococcus jannaschii)).